Here is a 317-residue protein sequence, read N- to C-terminus: Porphobilinogen deaminase (317 aa).

An S-(dipyrrolylmethanemethyl)cysteine modification is found at Cys-245.

Belongs to the HMBS family. As to quaternary structure, monomer. It depends on dipyrromethane as a cofactor.

It carries out the reaction 4 porphobilinogen + H2O = hydroxymethylbilane + 4 NH4(+). It functions in the pathway porphyrin-containing compound metabolism; protoporphyrin-IX biosynthesis; coproporphyrinogen-III from 5-aminolevulinate: step 2/4. The protein operates within porphyrin-containing compound metabolism; chlorophyll biosynthesis. Tetrapolymerization of the monopyrrole PBG into the hydroxymethylbilane pre-uroporphyrinogen in several discrete steps. The sequence is that of Porphobilinogen deaminase from Synechococcus sp. (strain CC9902).